A 186-amino-acid polypeptide reads, in one-letter code: Large ribosomal subunit protein uL22 (186 aa).

The interval 159-186 is disordered; sequence KAAENEPAKKKLSKKKLQRQKEKMMRNE. The span at 177–186 shows a compositional bias: basic and acidic residues; it reads RQKEKMMRNE.

The protein belongs to the universal ribosomal protein uL22 family.

This is Large ribosomal subunit protein uL22 (RpL17) from Aedes albopictus (Asian tiger mosquito).